A 245-amino-acid chain; its full sequence is tRNA pseudouridine synthase A (245 aa).

The active-site Nucleophile is the D52. Y111 contributes to the substrate binding site.

The protein belongs to the tRNA pseudouridine synthase TruA family. As to quaternary structure, homodimer.

The enzyme catalyses uridine(38/39/40) in tRNA = pseudouridine(38/39/40) in tRNA. Functionally, formation of pseudouridine at positions 38, 39 and 40 in the anticodon stem and loop of transfer RNAs. The polypeptide is tRNA pseudouridine synthase A (Rickettsia prowazekii (strain Madrid E)).